The primary structure comprises 89 residues: MARVTVQGAVEKIGNRFDLILTAARRARQLQLHIREPLVPEDNDKPTVIALREIEKGLINNEIMNAQERYDALEKENSELHAVSLLSNQ.

Belongs to the RNA polymerase subunit omega family. In terms of assembly, the RNAP catalytic core consists of 2 alpha, 1 beta, 1 beta' and 1 omega subunit. When a sigma factor is associated with the core the holoenzyme is formed, which can initiate transcription.

The catalysed reaction is RNA(n) + a ribonucleoside 5'-triphosphate = RNA(n+1) + diphosphate. Its function is as follows. Promotes RNA polymerase assembly. Latches the N- and C-terminal regions of the beta' subunit thereby facilitating its interaction with the beta and alpha subunits. The protein is DNA-directed RNA polymerase subunit omega (rpoZ) of Pasteurella multocida (strain Pm70).